The sequence spans 491 residues: Chromosomal replication initiator protein DnaA (491 aa).

Residues 1–86 (MTDELNSQFT…VEALSRRLGE (86 aa)) form a domain I, interacts with DnaA modulators region. Residues 86 to 150 (ENVELGVRIA…GADKAETPDT (65 aa)) form a domain II region. A domain III, AAA+ region region spans residues 151–367 (SLNARYTFES…GALIRVTAFA (217 aa)). ATP contacts are provided by Gly-195, Gly-197, Lys-198, and Thr-199. The segment at 368–491 (SLNKSPIELS…TARIRQRSRH (124 aa)) is domain IV, binds dsDNA.

The protein belongs to the DnaA family. Oligomerizes as a right-handed, spiral filament on DNA at oriC.

It localises to the cytoplasm. Its function is as follows. Plays an essential role in the initiation and regulation of chromosomal replication. ATP-DnaA binds to the origin of replication (oriC) to initiate formation of the DNA replication initiation complex once per cell cycle. Binds the DnaA box (a 9 base pair repeat at the origin) and separates the double-stranded (ds)DNA. Forms a right-handed helical filament on oriC DNA; dsDNA binds to the exterior of the filament while single-stranded (ss)DNA is stabiized in the filament's interior. The ATP-DnaA-oriC complex binds and stabilizes one strand of the AT-rich DNA unwinding element (DUE), permitting loading of DNA polymerase. After initiation quickly degrades to an ADP-DnaA complex that is not apt for DNA replication. Binds acidic phospholipids. This chain is Chromosomal replication initiator protein DnaA, found in Mycobacteroides abscessus (strain ATCC 19977 / DSM 44196 / CCUG 20993 / CIP 104536 / JCM 13569 / NCTC 13031 / TMC 1543 / L948) (Mycobacterium abscessus).